Consider the following 744-residue polypeptide: Protein zyg-11 homolog B (744 aa).

LRR repeat units lie at residues 185-208 (LPRL…LACK), 216-236 (MHHL…VREL), and 237-261 (KHLN…LLEQ).

Belongs to the zyg-11 family. Interacts with ELOC/Elongin C. Part of an E3 ubiquitin ligase complex including ZYG11B, CUL2 and Elongin BC.

Functionally, serves as substrate adapter subunit in the E3 ubiquitin ligase complex ZYG11B-CUL2-Elongin BC. Acts redudantly with ZER1 to target substrates bearing N-terminal glycine degrons for proteasomal degradation. Involved in the clearance of proteolytic fragments generated by caspase cleavage during apoptosis since N-terminal glycine degrons are strongly enriched at caspase cleavage sites. Also important in the quality control of protein N-myristoylation in which N-terminal glycine degrons are conditionally exposed after a failure of N-myristoylation. The chain is Protein zyg-11 homolog B from Mus musculus (Mouse).